Consider the following 792-residue polypeptide: Carboxysome assembly protein CsoS2 (792 aa).

Positions 1–15 are enriched in basic and acidic residues; that stretch reads MAKQSSRELALERRK. The tract at residues 1-235 is N-terminal domain; that stretch reads MAKQSSRELA…EISQRVRELR (235 aa). Disordered regions lie at residues 1–259, 280–299, and 338–359; these read MAKQ…RNGS, QVVTGTQANRSSKTTGNEAS, and HGNRVTGNEVGRSEKVTGDEPG. The N-repeat 1 repeat unit spans residues 7–22; it reads RELALERRKALSNSGK. Composition is skewed to polar residues over residues 17-36 and 69-82; these read LSNSGKKSTTLNGSSPNRIR and DTSFVASRESSGAS. The stretch at 94-109 is one N-repeat 2 repeat; that stretch reads RELVLARRDELSRRGQ. Basic and acidic residues-rich tracts occupy residues 97–106 and 113–126; these read VLARRDELSR and KSKDRTRAEVEKIS. A compositionally biased stretch (polar residues) spans 161-175; the sequence is DTVSRLSSRNSTSRP. N-repeat repeat units lie at residues 187 to 202 and 225 to 240; these read RALVLARREAQSKHGK and REISQRVRELRSKSGA. Residues 218 to 236 are compositionally biased toward basic and acidic residues; it reads GDPDLSSREISQRVRELRS. The middle region stretch occupies residues 240–615; it reads ATGKKRSGAC…VQACGSDAPA (376 aa). 6 M-repeat repeats span residues 270–319, 330–379, 388–427, 441–490, 500–549, and 560–609; these read KVGL…DTFC, KVAV…NQYC, KVGQSVTEDGRKVSGVMVGRSEKVTGDEAGSNRQLTGDQY, KVGS…NTFC, KVGL…SGWC, and RTPK…VQAC. Disordered stretches follow at residues 608-662 and 687-792; these read ACGS…GSQI and HFKS…GARG. The segment at 616–792 is C-terminal domain; the sequence is GSNDHQGSSE…LITVSGGARG (177 aa). Polar residues-rich tracts occupy residues 618-636 and 651-662; these read NDHQGSSESSPWTHFSVQS and VTGTSYEQGSQI. 2 C-repeat repeats span residues 633–678 and 703–738; these read SVQS…GTEQ and TRPESRVTGEGQSAGLNITGDDWDRSERVTGTEGAS. The segment at 763–792 is C-terminal peptide (CTP); it reads EVSQPMSRVTGSSGNTDQGSLITVSGGARG. The segment covering 764–785 has biased composition (polar residues); that stretch reads VSQPMSRVTGSSGNTDQGSLIT.

Belongs to the CsoS2 family. Probably interacts with the carboxysome major shell protein CsoS1 via the N-terminal domain; this complex probably also interacts with RuBisCO. Post-translationally, has been suggested to undergo ribosomal frameshifting, as does its ortholog in H.neapolitanus. The exact position of the putative frameshift is not given, but it would probably occur in the sixth M-repeat and remove the C-terminus.

The protein resides in the carboxysome. Required for alpha-carboxysome (Cb) assembly, mediates interaction between RuBisCO and the Cb shell. The protein is probably intrinsically disordered. The C-terminal repeats act as the encapsulation signal to target proteins to the Cb; they are necessary and sufficient to target both CsoS2 and foreign proteins to the Cb. The N-terminal repeats of this protein bind simultaneously to both subunits of RuBisCO. Probably also interacts with the major shell proteins (CsoS1); that interaction would increase the local concentration of CsoS2 so that it can condense RuBisCO and full carboxysomes can be formed. The sequence is that of Carboxysome assembly protein CsoS2 from Prochlorococcus marinus (strain MIT 9313).